The sequence spans 244 residues: Probable fimbrial assembly protein FimC, serogroup H1 (244 aa).

The polypeptide is Probable fimbrial assembly protein FimC, serogroup H1 (fimC) (Dichelobacter nodosus (Bacteroides nodosus)).